The sequence spans 158 residues: Transcription elongation factor GreA (158 aa).

Residues 47 to 68 (AEYDAAKEAQGLLELKIKKMEE) adopt a coiled-coil conformation.

The protein belongs to the GreA/GreB family.

In terms of biological role, necessary for efficient RNA polymerase transcription elongation past template-encoded arresting sites. The arresting sites in DNA have the property of trapping a certain fraction of elongating RNA polymerases that pass through, resulting in locked ternary complexes. Cleavage of the nascent transcript by cleavage factors such as GreA or GreB allows the resumption of elongation from the new 3'terminus. GreA releases sequences of 2 to 3 nucleotides. This is Transcription elongation factor GreA from Flavobacterium psychrophilum (strain ATCC 49511 / DSM 21280 / CIP 103535 / JIP02/86).